The primary structure comprises 922 residues: Protein translocase subunit SecA (922 aa).

Residues glutamine 87, 105-109 (GEGKT), and aspartate 516 contribute to the ATP site. The tract at residues 867-912 (YTAPTETGEPETLPDPRTAGAGGDGLNLPEGVRIGRNDPCPCGSGK) is disordered. Cysteine 906, cysteine 908, cysteine 917, and histidine 918 together coordinate Zn(2+).

This sequence belongs to the SecA family. Monomer and homodimer. Part of the essential Sec protein translocation apparatus which comprises SecA, SecYEG and auxiliary proteins SecDF-YajC and YidC. Zn(2+) is required as a cofactor.

It localises to the cell inner membrane. Its subcellular location is the cytoplasm. It carries out the reaction ATP + H2O + cellular proteinSide 1 = ADP + phosphate + cellular proteinSide 2.. Functionally, part of the Sec protein translocase complex. Interacts with the SecYEG preprotein conducting channel. Has a central role in coupling the hydrolysis of ATP to the transfer of proteins into and across the cell membrane, serving both as a receptor for the preprotein-SecB complex and as an ATP-driven molecular motor driving the stepwise translocation of polypeptide chains across the membrane. This chain is Protein translocase subunit SecA, found in Paracidovorax citrulli (strain AAC00-1) (Acidovorax citrulli).